The sequence spans 79 residues: Serine protease inhibitor Kazal-type 1 (79 aa).

Residues Met1–Ala23 form the signal peptide. One can recognise a Kazal-like domain in the interval Leu26–Cys79. 3 disulfides stabilise this stretch: Cys32-Cys61, Cys39-Cys58, and Cys47-Cys79.

The protein resides in the secreted. In terms of biological role, serine protease inhibitor which exhibits anti-trypsin activity. In the pancreas, protects against trypsin-catalyzed premature activation of zymogens. In the male reproductive tract, binds to sperm heads where it modulates sperm capacitance by inhibiting calcium uptake and nitrogen oxide (NO) production. The chain is Serine protease inhibitor Kazal-type 1 (SPINK1) from Homo sapiens (Human).